Reading from the N-terminus, the 217-residue chain is Vesicle transport through interaction with t-SNAREs homolog 1A (217 aa).

The Cytoplasmic segment spans residues 1–192; that stretch reads MSSDFEGYEQ…GMLRRIIQNR (192 aa). Coiled-coil stretches lie at residues 31 to 92 and 112 to 178; these read PDEK…KRSR and ENQR…GKSS. A helical membrane pass occupies residues 193–213; sequence ILLVILGIIVVITILMAITFS. Over 214–217 the chain is Extracellular; the sequence is VRRH.

Belongs to the VTI1 family. In terms of assembly, interacts with distinct SNARE complexes that contain either STX5 or STX6. Interacts with NAPA and, to a lesser extent, with NAPG. Identified in a complex containing STX6, STX12, VAMP4 and VTI1A.

Its subcellular location is the cytoplasmic vesicle. It localises to the golgi apparatus membrane. Its function is as follows. V-SNARE that mediates vesicle transport pathways through interactions with t-SNAREs on the target membrane. These interactions are proposed to mediate aspects of the specificity of vesicle trafficking and to promote fusion of the lipid bilayers. Involved in vesicular transport from the late endosomes to the trans-Golgi network. Along with VAMP7, involved in an non-conventional RAB1-dependent traffic route to the cell surface used by KCNIP1 and KCND2. May be involved in increased cytokine secretion associated with cellular senescence. This is Vesicle transport through interaction with t-SNAREs homolog 1A (VTI1A) from Homo sapiens (Human).